The chain runs to 493 residues: MTLIVTRDHAQWVHDMCRARAGNRYGYGGAFTLNPRDTTDCSGLVLQTAAWYGGRKDWIGNRYGSTESFRLDHKIVYDLGFRRLPPGGVAALGFTPVMLVGLQHGGGGRYSHTACTLMTMDIPGGPVKVSQRGVDWESRGEVNGVGVFLYDGARAWNDPLFHDFWYLDAKLEDGPTQSVDAAEILARATGLAYNRAVALLPAVRDGLIQADCTNPNRIAMWLAQIGHESDDFKATAEYASGDAYDTRTDLGNTPEVDGDGRLYKGRSWIMITGKDNYRDFSRWAHGRGLVPTPDYFVVHPLELSELRWAGIGAAWYWTVERPDINALSDRRDLETVTRRINGGLTNLDDRRRRYNLALAVGDQLLTLIGDDDELADPTIQRFIREIHGALFNTVVTQSPYGDPQNPDGSEPRSNLWQLHELIKNGDGMGHARYVEESARAGDLRELERVVRAAKGLGRDRSPEFIARARNVLAQIEAANPEYLQAYIARNGAL.

It belongs to the L5likevirus endolysin A protein family.

Its function is as follows. Endolysin that degrades host peptidoglycans and participates with the holin protein in the sequential events which lead to the programmed host cell lysis releasing the mature viral particles. Once the holin has permeabilized the host cell membrane, the endolysin can reach the periplasm and break down the peptidoglycan layer. This is Endolysin A (10) from Mycobacterium phage D29 (Mycobacteriophage D29).